A 186-amino-acid chain; its full sequence is MELSAAAGRRRQAPWREFTGRHRTERSQERGSTPRKERSMGSRQPRKREREPRDCTPTCTNAASVSRSGARRAPGCAGRCITMKNCARAWRELSERACCFQAVPPSNMKQSWLIFLDTTLCSAWLLASSCPRLYAPLISFHCMCFNTVLLFPRLFGPTLSAKIQFNTDLSLRAIAWKCTKDTTTYC.

Residues 1–62 (MELSAAAGRR…RDCTPTCTNA (62 aa)) form a disordered region. The span at 18–40 (FTGRHRTERSQERGSTPRKERSM) shows a compositional bias: basic and acidic residues.

In terms of biological role, may play a role in cAMP-mediated gene transcription. The chain is Putative transcriptional regulator encoded by LINC00473 (LINC00473) from Homo sapiens (Human).